Reading from the N-terminus, the 135-residue chain is MSFISEFKEFAMRGNVIDMAVGVVIGGAFGKIVSSLVGDIIMPVVGVVTGGVNFTDLKLTLKEAAEGAPAVTINYGSFIQTMVDFLIIAFCIFCVIKALNTLKNKLPKEEEAAPAEPEIPADIALLTEIRDLLKK.

2 consecutive transmembrane segments (helical) span residues 10–30 (FAMR…GAFG) and 76–96 (GSFI…FCVI).

This sequence belongs to the MscL family. Homopentamer.

Its subcellular location is the cell inner membrane. Functionally, channel that opens in response to stretch forces in the membrane lipid bilayer. May participate in the regulation of osmotic pressure changes within the cell. This chain is Large-conductance mechanosensitive channel, found in Campylobacter concisus (strain 13826).